The following is a 280-amino-acid chain: Coiled-coil domain-containing protein 106 (280 aa).

Residues Thr63–Arg101 adopt a coiled-coil conformation. Residues Glu103 to Ser121 are compositionally biased toward basic and acidic residues. Residues Glu103 to Val176 are disordered. Ser130 is modified (phosphoserine). Low complexity predominate over residues Glu133–Gly146. The short motif at Arg151 to Arg164 is the Bipartite nuclear localization signal element. Basic residues predominate over residues Arg152–Pro168.

In terms of assembly, interacts with p53/TP53.

The protein localises to the nucleus. In terms of biological role, promotes the degradation of p53/TP53 protein and inhibits its transactivity. This chain is Coiled-coil domain-containing protein 106 (CCDC106), found in Homo sapiens (Human).